Consider the following 379-residue polypeptide: Oxysterol-binding protein-related protein 4C (379 aa).

This sequence belongs to the OSBP family. Expressed in flowers.

Its function is as follows. May be involved in the transport of sterols. The protein is Oxysterol-binding protein-related protein 4C (ORP4C) of Arabidopsis thaliana (Mouse-ear cress).